The sequence spans 468 residues: Anthocyanidin 3-O-glucoside 2'''-O-xylosyltransferase (468 aa).

UDP-alpha-D-xylose-binding positions include S284, 344–346, 361–369, and 383–386; these read IQQ, HCGFGSMWE, and HGEQ.

It belongs to the UDP-glycosyltransferase family.

The catalysed reaction is an anthocyanidin 3-O-beta-D-glucoside + UDP-alpha-D-xylose = an anthocyanidin 3-O-beta-D-sambubioside + UDP + 2 H(+). The protein operates within secondary metabolite biosynthesis; flavonoid biosynthesis. Contributes to the last few anthocyanin biosynthetic steps. Converts cyanidin 3-O-glucoside to cyanidin 3-O-xylosyl(1-&gt;2)glucoside. Can use 3-O-glucosylated anthocyanidins/flavonols and uridine diphosphate (UDP)-xylose as substrates. The polypeptide is Anthocyanidin 3-O-glucoside 2'''-O-xylosyltransferase (A3G2XYLT) (Arabidopsis thaliana (Mouse-ear cress)).